A 785-amino-acid chain; its full sequence is Endonuclease MutS2 (785 aa).

335 to 342 (GPNTGGKT) contributes to the ATP binding site. Residues 710 to 785 (LDLRGERYED…GNGVTIVEFK (76 aa)) enclose the Smr domain.

It belongs to the DNA mismatch repair MutS family. MutS2 subfamily. Homodimer. Binds to stalled ribosomes, contacting rRNA.

Endonuclease that is involved in the suppression of homologous recombination and thus may have a key role in the control of bacterial genetic diversity. In terms of biological role, acts as a ribosome collision sensor, splitting the ribosome into its 2 subunits. Detects stalled/collided 70S ribosomes which it binds and splits by an ATP-hydrolysis driven conformational change. Acts upstream of the ribosome quality control system (RQC), a ribosome-associated complex that mediates the extraction of incompletely synthesized nascent chains from stalled ribosomes and their subsequent degradation. Probably generates substrates for RQC. This chain is Endonuclease MutS2, found in Listeria monocytogenes serotype 4b (strain CLIP80459).